Reading from the N-terminus, the 610-residue chain is Dihydroxy-acid dehydratase (610 aa).

Residue aspartate 81 participates in Mg(2+) binding. [2Fe-2S] cluster is bound at residue cysteine 122. The Mg(2+) site is built by aspartate 123 and lysine 124. Position 124 is an N6-carboxylysine (lysine 124). [2Fe-2S] cluster is bound at residue cysteine 193. Glutamate 489 serves as a coordination point for Mg(2+). Serine 515 functions as the Proton acceptor in the catalytic mechanism.

This sequence belongs to the IlvD/Edd family. As to quaternary structure, homodimer. It depends on [2Fe-2S] cluster as a cofactor. Mg(2+) is required as a cofactor.

It catalyses the reaction (2R)-2,3-dihydroxy-3-methylbutanoate = 3-methyl-2-oxobutanoate + H2O. The enzyme catalyses (2R,3R)-2,3-dihydroxy-3-methylpentanoate = (S)-3-methyl-2-oxopentanoate + H2O. Its pathway is amino-acid biosynthesis; L-isoleucine biosynthesis; L-isoleucine from 2-oxobutanoate: step 3/4. The protein operates within amino-acid biosynthesis; L-valine biosynthesis; L-valine from pyruvate: step 3/4. In terms of biological role, functions in the biosynthesis of branched-chain amino acids. Catalyzes the dehydration of (2R,3R)-2,3-dihydroxy-3-methylpentanoate (2,3-dihydroxy-3-methylvalerate) into 2-oxo-3-methylpentanoate (2-oxo-3-methylvalerate) and of (2R)-2,3-dihydroxy-3-methylbutanoate (2,3-dihydroxyisovalerate) into 2-oxo-3-methylbutanoate (2-oxoisovalerate), the penultimate precursor to L-isoleucine and L-valine, respectively. The polypeptide is Dihydroxy-acid dehydratase (Xylella fastidiosa (strain M12)).